A 540-amino-acid chain; its full sequence is Phosphoenolpyruvate carboxykinase (ATP) (540 aa).

Position 65 (Arg-65) interacts with substrate. Position 87 is an N6-acetyllysine (Lys-87). Substrate-binding residues include Tyr-207 and Lys-213. Residues Lys-213, His-232, and 248 to 256 (GLSGTGKTT) contribute to the ATP site. 2 residues coordinate Mn(2+): Lys-213 and His-232. Residue Asp-269 coordinates Mn(2+). ATP contacts are provided by residues Glu-297, Arg-333, 449 to 450 (RI), and Thr-455. Substrate is bound at residue Arg-333. N6-acetyllysine is present on Lys-523.

It belongs to the phosphoenolpyruvate carboxykinase (ATP) family. In terms of assembly, monomer. Mn(2+) is required as a cofactor.

It is found in the cytoplasm. It carries out the reaction oxaloacetate + ATP = phosphoenolpyruvate + ADP + CO2. It functions in the pathway carbohydrate biosynthesis; gluconeogenesis. In terms of biological role, involved in the gluconeogenesis. Catalyzes the conversion of oxaloacetate (OAA) to phosphoenolpyruvate (PEP) through direct phosphoryl transfer between the nucleoside triphosphate and OAA. In Escherichia coli O127:H6 (strain E2348/69 / EPEC), this protein is Phosphoenolpyruvate carboxykinase (ATP).